The primary structure comprises 179 residues: Large ribosomal subunit protein uL6 (179 aa).

This sequence belongs to the universal ribosomal protein uL6 family. In terms of assembly, part of the 50S ribosomal subunit.

Functionally, this protein binds to the 23S rRNA, and is important in its secondary structure. It is located near the subunit interface in the base of the L7/L12 stalk, and near the tRNA binding site of the peptidyltransferase center. This Chlorobium phaeobacteroides (strain BS1) protein is Large ribosomal subunit protein uL6.